A 449-amino-acid chain; its full sequence is Tubulin alpha-2 chain (449 aa).

Residue Gln11 coordinates GTP. Lys40 carries the N6-acetyllysine modification. GTP contacts are provided by Ser140, Gly144, Thr145, Thr179, Asn206, and Asn228. Glu254 is a catalytic residue.

Belongs to the tubulin family. As to quaternary structure, dimer of alpha and beta chains. A typical microtubule is a hollow water-filled tube with an outer diameter of 25 nm and an inner diameter of 15 nM. Alpha-beta heterodimers associate head-to-tail to form protofilaments running lengthwise along the microtubule wall with the beta-tubulin subunit facing the microtubule plus end conferring a structural polarity. Microtubules usually have 13 protofilaments but different protofilament numbers can be found in some organisms and specialized cells. In terms of processing, acetylation of alpha chains at Lys-40 stabilizes microtubules and affects affinity and processivity of microtubule motors. This modification has a role in multiple cellular functions, ranging from cell motility, cell cycle progression or cell differentiation to intracellular trafficking and signaling.

Its subcellular location is the cytoplasm. It is found in the cytoskeleton. The catalysed reaction is GTP + H2O = GDP + phosphate + H(+). In terms of biological role, tubulin is the major constituent of microtubules, a cylinder consisting of laterally associated linear protofilaments composed of alpha- and beta-tubulin heterodimers. Microtubules grow by the addition of GTP-tubulin dimers to the microtubule end, where a stabilizing cap forms. Below the cap, tubulin dimers are in GDP-bound state, owing to GTPase activity of alpha-tubulin. The chain is Tubulin alpha-2 chain from Stylonychia lemnae (Ciliate).